We begin with the raw amino-acid sequence, 358 residues long: Photosystem II protein D1 2 (358 aa).

3 helical membrane passes run 28-45 (YVGW…AATT), 117-132 (HFLI…QWEL), and 141-155 (WICV…AAFA). Residue histidine 117 participates in chlorophyll a binding. Pheophytin a is bound at residue tyrosine 125. [CaMn4O5] cluster is bound by residues aspartate 169 and glutamate 188. Residues 196-217 (FHMLGVAGVFGGSLFSAMHGSL) form a helical membrane-spanning segment. Histidine 197 lines the chlorophyll a pocket. Residues histidine 214 and 263–264 (SF) contribute to the a quinone site. Fe cation is bound at residue histidine 214. Histidine 271 serves as a coordination point for Fe cation. A helical membrane pass occupies residues 273-287 (FLAAWPVVGIWFTSM). [CaMn4O5] cluster-binding residues include histidine 331, glutamate 332, aspartate 341, and alanine 343. Positions 344-358 (ATESTPVALQAPTIG) are excised as a propeptide.

Belongs to the reaction center PufL/M/PsbA/D family. As to quaternary structure, PSII is composed of 1 copy each of membrane proteins PsbA, PsbB, PsbC, PsbD, PsbE, PsbF, PsbH, PsbI, PsbJ, PsbK, PsbL, PsbM, PsbT, PsbX, PsbY, PsbZ, Psb30/Ycf12, peripheral proteins PsbO, CyanoQ (PsbQ), PsbU, PsbV and a large number of cofactors. It forms dimeric complexes. The D1/D2 heterodimer binds P680, chlorophylls that are the primary electron donor of PSII, and subsequent electron acceptors. It shares a non-heme iron and each subunit binds pheophytin, quinone, additional chlorophylls, carotenoids and lipids. D1 provides most of the ligands for the Mn4-Ca-O5 cluster of the oxygen-evolving complex (OEC). There is also a Cl(-1) ion associated with D1 and D2, which is required for oxygen evolution. The PSII complex binds additional chlorophylls, carotenoids and specific lipids. serves as cofactor. In terms of processing, tyr-160 forms a radical intermediate that is referred to as redox-active TyrZ, YZ or Y-Z. C-terminally processed by CtpA; processing is essential to allow assembly of the oxygen-evolving complex and thus photosynthetic growth.

It is found in the cellular thylakoid membrane. The catalysed reaction is 2 a plastoquinone + 4 hnu + 2 H2O = 2 a plastoquinol + O2. Functionally, photosystem II (PSII) is a light-driven water:plastoquinone oxidoreductase that uses light energy to abstract electrons from H(2)O, generating O(2) and a proton gradient subsequently used for ATP formation. It consists of a core antenna complex that captures photons, and an electron transfer chain that converts photonic excitation into a charge separation. The D1/D2 (PsbA/PsbD) reaction center heterodimer binds P680, the primary electron donor of PSII as well as several subsequent electron acceptors. The chain is Photosystem II protein D1 2 from Synechococcus sp. (strain WH7803).